We begin with the raw amino-acid sequence, 124 residues long: Calvin cycle protein CP12-1, chloroplastic (124 aa).

The N-terminal 47 residues, 1–47 (MTTIAAAGLNVATPRVVVRPVARVLGPVRLNYPWKFGSMKRMVVVKA), are a transit peptide targeting the chloroplast. Intrachain disulfides connect C68/C77 and C110/C119. Positions 90–124 (AASHARDKKKAGGSDPLEEYCNDNPETDECRTYDN) are disordered. A compositionally biased stretch (acidic residues) spans 105–116 (PLEEYCNDNPET).

It belongs to the CP12 family. As to quaternary structure, monomer. Component of a complex that contains two dimers of PRK, two tetramers of GAPDH and CP12. CP12 associates with GAPDH, causing its conformation to change. This GAPDH/CP12 complex binds PRK to form a half-complex (one unit). This unit probably dimerizes due partially to interactions between the enzymes of each unit. Contains two disulfide bonds; only the oxidized protein, with two disulfide bonds, is active in complex formation. The C-terminal disulfide is involved in the interaction with GAPDH and the N-terminal disulfide mediates the binding of PRK with this binary complex. In terms of tissue distribution, mostly expressed in flowers, hypocotyl, cotyledons, leaves, stems, and flower stalks. Barely detectable in roots and siliques. Present in root tips and lateral roots. Accumulates in the cotyledons of etiolated seedlings.

It is found in the plastid. The protein resides in the chloroplast. In terms of biological role, acts as a linker essential in the assembly of a core complex of PRK/GAPDH. Coordinates the reversible inactivation of chloroplast enzymes GAPDH and PRK during darkness in photosynthetic tissues. The protein is Calvin cycle protein CP12-1, chloroplastic (CP12-1) of Arabidopsis thaliana (Mouse-ear cress).